Here is a 174-residue protein sequence, read N- to C-terminus: Ribosome maturation factor RimM (174 aa).

The region spanning 98 to 171 is the PRC barrel domain; the sequence is EDEFYFHEII…KIKIHVMEGL (74 aa).

Belongs to the RimM family. In terms of assembly, binds ribosomal protein uS19.

The protein resides in the cytoplasm. In terms of biological role, an accessory protein needed during the final step in the assembly of 30S ribosomal subunit, possibly for assembly of the head region. Essential for efficient processing of 16S rRNA. May be needed both before and after RbfA during the maturation of 16S rRNA. It has affinity for free ribosomal 30S subunits but not for 70S ribosomes. This chain is Ribosome maturation factor RimM, found in Bacillus velezensis (strain DSM 23117 / BGSC 10A6 / LMG 26770 / FZB42) (Bacillus amyloliquefaciens subsp. plantarum).